Here is a 491-residue protein sequence, read N- to C-terminus: MTSATTVKTEYEAIIGLETHCQLSTNTKIFSSSSTAFGADPNTNIDPVCMGLPGVLPVLNEKVLEYAVKAGLALNCQIAKYSKFDRKQYFYPDLPKNYQISQYDLPIAEHGWLEIELLDADGNPKRKRIGITRLHMEEDAGKLVHAGSDRISGSTYSLVDYNRAGVPLVEIVSEPDIRTGQEAAEYAQELRRVMRYLGVSDGNMQEGSLRCDVNISVRPVGQEKFGTKVEIKNMNSFSAIQKAIEHEIERQIEAIESGEKIIQETRLWEEGSQRTISMRIKEGSSDYRYFPEPDLAPIEVTEAQLSQWRSELPELPAQKRHRYENELGLSAYDTRVLTEDVIVSQYFEVAIASGANPKAAANWITQDIAAYLNKQKLSITEIGLTPANLADVITRIETGKISNAQAKQKLPELLTGLSPEKAFAGQELISDPSVLEPIVDEVIAANPKELEKYRNGNINLKGFFVGQVLKKTNKRADPKLTNELVENKLNG.

Belongs to the GatB/GatE family. GatB subfamily. In terms of assembly, heterotrimer of A, B and C subunits.

It carries out the reaction L-glutamyl-tRNA(Gln) + L-glutamine + ATP + H2O = L-glutaminyl-tRNA(Gln) + L-glutamate + ADP + phosphate + H(+). The catalysed reaction is L-aspartyl-tRNA(Asn) + L-glutamine + ATP + H2O = L-asparaginyl-tRNA(Asn) + L-glutamate + ADP + phosphate + 2 H(+). Its function is as follows. Allows the formation of correctly charged Asn-tRNA(Asn) or Gln-tRNA(Gln) through the transamidation of misacylated Asp-tRNA(Asn) or Glu-tRNA(Gln) in organisms which lack either or both of asparaginyl-tRNA or glutaminyl-tRNA synthetases. The reaction takes place in the presence of glutamine and ATP through an activated phospho-Asp-tRNA(Asn) or phospho-Glu-tRNA(Gln). The chain is Aspartyl/glutamyl-tRNA(Asn/Gln) amidotransferase subunit B from Nostoc sp. (strain PCC 7120 / SAG 25.82 / UTEX 2576).